We begin with the raw amino-acid sequence, 221 residues long: Inositol phosphorylceramide synthase regulatory subunit KEI1 (221 aa).

Transmembrane regions (helical) follow at residues serine 11–leucine 31, tryptophan 54–isoleucine 74, leucine 79–phenylalanine 99, and isoleucine 154–phenylalanine 174. The interval glutamine 176–glutamate 221 is COPI vesicle-binding.

Belongs to the KEI1 family. Component of the inositol phosphorylceramide synthase complex composed of at least AUR1 and KEI1. Interacts (via C-terminal region) with COP1 and SEC21. Note=The interaction with AUR1 seems to occur with the full-length protein before cleavage by KEX2 since both full-length and short chains of KEI1 interact with AUR1. In terms of processing, the precursor protein is cleaved into two polypeptide chains, KEI1N and KEI1C. The cleavage is performed in the Golgi apparatus by the KEX2 protease which recognizes residue Arg-135. Generation of KEX2 cleavage site may have been an accidental event in evolution without specific advantages or disadvantages in IPC synthesis.

The protein localises to the golgi apparatus membrane. Regulatory component of the inositol phosphorylceramide (ICP) synthase which catalyzes the addition of a phosphorylinositol group onto ceramide to form inositol phosphorylceramide, an essential step in sphingolipid biosynthesis. Helps the medial Golgi localization of IPC synthase in a COPI vesicle-dependent manner. The protein is Inositol phosphorylceramide synthase regulatory subunit KEI1 (KEI1) of Saccharomyces cerevisiae (strain ATCC 204508 / S288c) (Baker's yeast).